Consider the following 1531-residue polypeptide: Protein turtle (1531 aa).

Residues 1-858 (MGVCADLGSH…PARVKHKAIT (858 aa)) are Extracellular-facing. The segment at 19–44 (QHNTEKSKEQQQQSQPLEIPEQRASK) is disordered. Ig-like C2-type domains follow at residues 132 to 243 (PEDA…KNGT), 253 to 340 (PRFS…ARVI), 344 to 436 (GAVI…AYLS), 440 to 529 (PAKV…GVMD), and 536 to 624 (PAFT…MAVT). 5 disulfides stabilise this stretch: Cys-150–Cys-227, Cys-275–Cys-324, Cys-366–Cys-419, Cys-462–Cys-513, and Cys-558–Cys-611. Fibronectin type-III domains follow at residues 632–728 (QPHA…TLED) and 760–851 (PPRN…VPAR). The helical transmembrane segment at 859-879 (AGVVGGILFFIVAIILSVCAV) threads the bilayer. Over 880–1531 (KICNKRKRRK…QAMQQMESVC (652 aa)) the chain is Cytoplasmic. Disordered regions lie at residues 1248–1269 (EETR…VPLQ) and 1318–1395 (NLNL…SYPR). A compositionally biased stretch (low complexity) spans 1333–1349 (SPESRSSSSGFGSKNTS). Polar residues predominate over residues 1380–1389 (QQAQGQTPHG).

The protein belongs to the immunoglobulin superfamily. Turtle family. In terms of assembly, interacts with bdl. Exclusively expressed in the central nervous system.

It is found in the membrane. In terms of biological role, essential protein that plays a role in the establishment of coordinated motor control. In the developing eye, involved in axonal targeting of the R7 photoreceptor. In Drosophila melanogaster (Fruit fly), this protein is Protein turtle (tutl).